We begin with the raw amino-acid sequence, 625 residues long: Coagulation factor XI (625 aa).

The first 18 residues, 1–18 (MTLLYQMVHFALFASVAG), serve as a signal peptide directing secretion. Apple domains are found at residues 20-103 (CVTT…SKQC), 110-193 (CSKD…LKSC), 200-283 (CIRD…LQHC), and 291-374 (CHSS…LRLC). Intrachain disulfides connect C20/C103, C46/C76, C50/C56, C110/C193, C136/C165, C140/C146, C200/C283, C226/C255, C230/C236, C291/C374, C317/C346, C321/C327, C380/C500, C416/C432, C514/C581, C545/C560, and C571/C599. Residues N90 and N126 are each glycosylated (N-linked (GlcNAc...) asparagine). The Peptidase S1 domain occupies 388-623 (IVGGTQSVHG…YVDWILEKTQ (236 aa)). The Charge relay system role is filled by H431. A glycan (N-linked (GlcNAc...) asparagine) is linked at N450. Catalysis depends on D480, which acts as the Charge relay system. N-linked (GlcNAc...) asparagine glycosylation occurs at N491. A heparin-binding site is contributed by 547–550 (AGYR). Residue S575 is the Charge relay system of the active site.

This sequence belongs to the peptidase S1 family. Plasma kallikrein subfamily. In terms of assembly, homodimer; disulfide-linked. After activation the heavy and light chains are also linked by a disulfide bond. Interacts (activated) with F9 (inactive and activated) in calcium-dependent manner. Forms a heterodimer with SERPINA5. Post-translationally, activated by factor XIIa (or XII), which cleaves each polypeptide after Arg-387 into the light chain, which contains the active site, and the heavy chain, which associates with high molecular weight (HMW) kininogen. Activated by F12 (activated); the presence of negatively charged surfaces accelerates activation. Activated by F2 (thrombin); the presence of negatively charged surfaces, such as polyphosphate and dextran sulfate, strongly accelerates activation. Autoactivated; the presence of negatively charged surfaces, such as polyphosphate and dextran sulfate, accelerates autoactivation and autolysis. In terms of processing, N-glycosylated on both chains. N-glycosylated sites mainly consist of nonfucosylated sialylated biantennary (in high abundance) and/or triantennary (in low abundance) complex structures.

The protein resides in the secreted. It catalyses the reaction Selective cleavage of Arg-|-Ala and Arg-|-Val bonds in factor IX to form factor IXa.. Inhibited by SERPINA5. Its function is as follows. Factor XI triggers the middle phase of the intrinsic pathway of blood coagulation by activating factor IX. In Bos taurus (Bovine), this protein is Coagulation factor XI (F11).